The primary structure comprises 151 residues: Ribonuclease H (151 aa).

An RNase H type-1 domain is found at 1–141; it reads MKHVDIFTDG…ADELARKGME (141 aa). Mg(2+)-binding residues include D9, E47, D69, and D133.

This sequence belongs to the RNase H family. As to quaternary structure, monomer. The cofactor is Mg(2+).

The protein localises to the cytoplasm. It catalyses the reaction Endonucleolytic cleavage to 5'-phosphomonoester.. Functionally, endonuclease that specifically degrades the RNA of RNA-DNA hybrids. This Rhizobium johnstonii (strain DSM 114642 / LMG 32736 / 3841) (Rhizobium leguminosarum bv. viciae) protein is Ribonuclease H.